Consider the following 179-residue polypeptide: Large ribosomal subunit protein uL5 (179 aa).

This sequence belongs to the universal ribosomal protein uL5 family. As to quaternary structure, part of the 50S ribosomal subunit; part of the 5S rRNA/L5/L18/L25 subcomplex. Contacts the 5S rRNA and the P site tRNA. Forms a bridge to the 30S subunit in the 70S ribosome.

Its function is as follows. This is one of the proteins that bind and probably mediate the attachment of the 5S RNA into the large ribosomal subunit, where it forms part of the central protuberance. In the 70S ribosome it contacts protein S13 of the 30S subunit (bridge B1b), connecting the 2 subunits; this bridge is implicated in subunit movement. Contacts the P site tRNA; the 5S rRNA and some of its associated proteins might help stabilize positioning of ribosome-bound tRNAs. The sequence is that of Large ribosomal subunit protein uL5 from Paramagnetospirillum magneticum (strain ATCC 700264 / AMB-1) (Magnetospirillum magneticum).